We begin with the raw amino-acid sequence, 1171 residues long: ATP-dependent helicase/deoxyribonuclease subunit B (1171 aa).

A UvrD-like helicase ATP-binding domain is found at 1–301 (MSLRFVIGRA…AHLEMHYEAR (301 aa)). 8-15 (GRAGSGKS) is an ATP binding site. Positions 281–587 (MKQPRFHSQA…QFANIPPSLD (307 aa)) constitute a UvrD-like helicase C-terminal domain. Cys-805, Cys-1129, Cys-1132, and Cys-1138 together coordinate [4Fe-4S] cluster.

This sequence belongs to the helicase family. AddB/RexB type 1 subfamily. Heterodimer of AddA and AddB. Mg(2+) serves as cofactor. Requires [4Fe-4S] cluster as cofactor.

The heterodimer acts as both an ATP-dependent DNA helicase and an ATP-dependent, dual-direction single-stranded exonuclease. Recognizes the chi site generating a DNA molecule suitable for the initiation of homologous recombination. The AddB subunit has 5' -&gt; 3' nuclease activity but not helicase activity. The sequence is that of ATP-dependent helicase/deoxyribonuclease subunit B from Bacillus mycoides (strain KBAB4) (Bacillus weihenstephanensis).